The primary structure comprises 517 residues: Ribonuclease Y (517 aa).

A helical transmembrane segment spans residues 4–24 (LIYIVILFVGIAAGAFFGISV). One can recognise a KH domain in the interval 207 to 267 (TISTVALPND…LRREVARRTI (61 aa)). Positions 333 to 426 (VLAHSVEVAQ…VAAADAISAA (94 aa)) constitute an HD domain.

This sequence belongs to the RNase Y family.

It is found in the cell membrane. Functionally, endoribonuclease that initiates mRNA decay. This is Ribonuclease Y from Fervidobacterium nodosum (strain ATCC 35602 / DSM 5306 / Rt17-B1).